A 103-amino-acid polypeptide reads, in one-letter code: Small ribosomal subunit protein uS10 (103 aa).

Belongs to the universal ribosomal protein uS10 family. As to quaternary structure, part of the 30S ribosomal subunit.

Its function is as follows. Involved in the binding of tRNA to the ribosomes. The chain is Small ribosomal subunit protein uS10 from Acinetobacter baylyi (strain ATCC 33305 / BD413 / ADP1).